Reading from the N-terminus, the 508-residue chain is Histidine ammonia-lyase (508 aa).

Residues 143–145 constitute a cross-link (5-imidazolinone (Ala-Gly)); the sequence is ASG. Ser144 is subject to 2,3-didehydroalanine (Ser).

Belongs to the PAL/histidase family. Contains an active site 4-methylidene-imidazol-5-one (MIO), which is formed autocatalytically by cyclization and dehydration of residues Ala-Ser-Gly.

The protein resides in the cytoplasm. The enzyme catalyses L-histidine = trans-urocanate + NH4(+). It participates in amino-acid degradation; L-histidine degradation into L-glutamate; N-formimidoyl-L-glutamate from L-histidine: step 1/3. In Anaeromyxobacter sp. (strain K), this protein is Histidine ammonia-lyase.